Reading from the N-terminus, the 132-residue chain is Large ribosomal subunit protein uL14 (132 aa).

It belongs to the universal ribosomal protein uL14 family. In terms of assembly, part of the 50S ribosomal subunit. Forms a cluster with proteins L3 and L24e, part of which may contact the 16S rRNA in 2 intersubunit bridges.

Binds to 23S rRNA. Forms part of two intersubunit bridges in the 70S ribosome. This is Large ribosomal subunit protein uL14 from Methanobrevibacter smithii (strain ATCC 35061 / DSM 861 / OCM 144 / PS).